Reading from the N-terminus, the 88-residue chain is Large ribosomal subunit protein bL27 (88 aa).

Residues M1–L21 form a disordered region.

The protein belongs to the bacterial ribosomal protein bL27 family.

This Thermobifida fusca (strain YX) protein is Large ribosomal subunit protein bL27.